Here is a 567-residue protein sequence, read N- to C-terminus: GBF-interacting protein 1 (567 aa).

Disordered stretches follow at residues 70–150 (ERKK…PSGI), 164–192 (DKVDTEEQPLSKATSSSKDVVEPDKSKES), and 545–567 (PIGPSHVTNQQPQAARTNLGNNY). 2 stretches are compositionally biased toward polar residues: residues 91–102 (FASSYTDASNGR) and 121–136 (TASSAPNNARNDTKPS). The span at 182 to 191 (DVVEPDKSKE) shows a compositional bias: basic and acidic residues. Residues 550–567 (HVTNQQPQAARTNLGNNY) show a composition bias toward polar residues.

It belongs to the GIP1 family. As to quaternary structure, monomer, homodimer, homooligomer. Under non-reducing conditions, predominantly present in high molecular weight forms, but predominates in low molecular weight monomers under reducing conditions. Interacts with BZIP16, BZIP68 and GBF1. Interacts with LBD18. As to expression, expressed in roots, leaves, stems and flowers.

The protein resides in the nucleus. In terms of biological role, plant specific protein that enhances G-box-binding factor (GBF) DNA binding activity. May function as a nuclear chaperone or lever and regulate the multimeric state of GBFs. May contribute to bZIP-mediated gene regulation. Is able to refold denatured rhodanese in vitro. Reduces DNA-binding activity of BZIP16, BZIP68 and GBF1 under non-reducing conditions through direct physical interaction. Acts as a negative co-regulator in red and blue light-mediated hypocotyl elongation. Functions to promote hypocotyl elongation during the early stages of seedling development by regulating the repression effect by BZIP16 and the activation effect by BZIP68 and GBF1 on LHCB2.4 expression. Enhances transcriptional activity of LBD18 in the EXP14 promoter. May act as a transcriptional coactivator of LBD18. This Arabidopsis thaliana (Mouse-ear cress) protein is GBF-interacting protein 1.